Reading from the N-terminus, the 325-residue chain is Holliday junction branch migration complex subunit RuvB (325 aa).

The interval 1 to 180 (MKNQLLDAKV…FGIHLKLNFY (180 aa)) is large ATPase domain (RuvB-L). ATP is bound by residues L19, R20, G61, K64, T65, T66, 127 to 129 (EDF), R170, Y180, and R217. Residue T65 coordinates Mg(2+). The interval 181–251 (SCEELTKIVE…ITDYALNQLG (71 aa)) is small ATPAse domain (RuvB-S). A head domain (RuvB-H) region spans residues 254 to 325 (KLGLDSSDHK…ITANALKHLH (72 aa)). DNA contacts are provided by R290, R309, and R314.

It belongs to the RuvB family. Homohexamer. Forms an RuvA(8)-RuvB(12)-Holliday junction (HJ) complex. HJ DNA is sandwiched between 2 RuvA tetramers; dsDNA enters through RuvA and exits via RuvB. An RuvB hexamer assembles on each DNA strand where it exits the tetramer. Each RuvB hexamer is contacted by two RuvA subunits (via domain III) on 2 adjacent RuvB subunits; this complex drives branch migration. In the full resolvosome a probable DNA-RuvA(4)-RuvB(12)-RuvC(2) complex forms which resolves the HJ.

Its subcellular location is the cytoplasm. It carries out the reaction ATP + H2O = ADP + phosphate + H(+). Its function is as follows. The RuvA-RuvB-RuvC complex processes Holliday junction (HJ) DNA during genetic recombination and DNA repair, while the RuvA-RuvB complex plays an important role in the rescue of blocked DNA replication forks via replication fork reversal (RFR). RuvA specifically binds to HJ cruciform DNA, conferring on it an open structure. The RuvB hexamer acts as an ATP-dependent pump, pulling dsDNA into and through the RuvAB complex. RuvB forms 2 homohexamers on either side of HJ DNA bound by 1 or 2 RuvA tetramers; 4 subunits per hexamer contact DNA at a time. Coordinated motions by a converter formed by DNA-disengaged RuvB subunits stimulates ATP hydrolysis and nucleotide exchange. Immobilization of the converter enables RuvB to convert the ATP-contained energy into a lever motion, pulling 2 nucleotides of DNA out of the RuvA tetramer per ATP hydrolyzed, thus driving DNA branch migration. The RuvB motors rotate together with the DNA substrate, which together with the progressing nucleotide cycle form the mechanistic basis for DNA recombination by continuous HJ branch migration. Branch migration allows RuvC to scan DNA until it finds its consensus sequence, where it cleaves and resolves cruciform DNA. This Orientia tsutsugamushi (strain Ikeda) (Rickettsia tsutsugamushi) protein is Holliday junction branch migration complex subunit RuvB.